A 342-amino-acid polypeptide reads, in one-letter code: N-acetyl-gamma-glutamyl-phosphate reductase (342 aa).

C149 is a catalytic residue.

Belongs to the NAGSA dehydrogenase family. Type 1 subfamily.

The protein localises to the cytoplasm. It carries out the reaction N-acetyl-L-glutamate 5-semialdehyde + phosphate + NADP(+) = N-acetyl-L-glutamyl 5-phosphate + NADPH + H(+). It participates in amino-acid biosynthesis; L-arginine biosynthesis; N(2)-acetyl-L-ornithine from L-glutamate: step 3/4. Its function is as follows. Catalyzes the NADPH-dependent reduction of N-acetyl-5-glutamyl phosphate to yield N-acetyl-L-glutamate 5-semialdehyde. This chain is N-acetyl-gamma-glutamyl-phosphate reductase, found in Nitrosospira multiformis (strain ATCC 25196 / NCIMB 11849 / C 71).